The chain runs to 532 residues: Fatty-acid amide hydrolase 2 (532 aa).

A helical membrane pass occupies residues 11 to 31 (LFLLRALGFLIGLVGRAALVL). Active-site charge relay system residues include lysine 131 and serine 206. The active-site Acyl-ester intermediate is serine 230.

It belongs to the amidase family. Homodimer. In terms of tissue distribution, expressed in kidney, liver, lung, prostate, heart and ovary.

The protein localises to the membrane. Its subcellular location is the lipid droplet. The enzyme catalyses N-(5Z,8Z,11Z,14Z-eicosatetraenoyl)-ethanolamine + H2O = ethanolamine + (5Z,8Z,11Z,14Z)-eicosatetraenoate. It catalyses the reaction (9Z)-octadecenamide + H2O = (9Z)-octadecenoate + NH4(+). It carries out the reaction N-(9Z-octadecenoyl) ethanolamine + H2O = ethanolamine + (9Z)-octadecenoate. The catalysed reaction is N-hexadecanoylethanolamine + H2O = ethanolamine + hexadecanoate. With respect to regulation, inhibited by O-aryl carbamates and alpha-keto heterocytes. In terms of biological role, catalyzes the hydrolysis of endogenous amidated lipids like the sleep-inducing lipid oleamide ((9Z)-octadecenamide), the endocannabinoid anandamide (N-(5Z,8Z,11Z,14Z-eicosatetraenoyl)-ethanolamine), as well as other fatty amides, to their corresponding fatty acids, thereby regulating the signaling functions of these molecules. Hydrolyzes monounsaturated substrate anandamide preferentially as compared to polyunsaturated substrates. The chain is Fatty-acid amide hydrolase 2 (FAAH2) from Homo sapiens (Human).